Here is a 212-residue protein sequence, read N- to C-terminus: FMN-dependent NADH:quinone oxidoreductase (212 aa).

Residues Ser10, Ser16–Ser18, and Met98–Phe101 contribute to the FMN site.

This sequence belongs to the azoreductase type 1 family. As to quaternary structure, homodimer. Requires FMN as cofactor.

It carries out the reaction 2 a quinone + NADH + H(+) = 2 a 1,4-benzosemiquinone + NAD(+). It catalyses the reaction N,N-dimethyl-1,4-phenylenediamine + anthranilate + 2 NAD(+) = 2-(4-dimethylaminophenyl)diazenylbenzoate + 2 NADH + 2 H(+). In terms of biological role, quinone reductase that provides resistance to thiol-specific stress caused by electrophilic quinones. Also exhibits azoreductase activity. Catalyzes the reductive cleavage of the azo bond in aromatic azo compounds to the corresponding amines. The sequence is that of FMN-dependent NADH:quinone oxidoreductase from Desulfotalea psychrophila (strain LSv54 / DSM 12343).